The following is a 114-amino-acid chain: T cell receptor beta variable 6-2 (114 aa).

Residues 1–21 form the signal peptide; that stretch reads MSLGLLCCGAFSLLWAGPVNA. Residues 22–114 form the Ig-like domain; sequence GVTQTPKFRV…TSVYFCASSY (93 aa). Residues Cys-42 and Cys-110 are joined by a disulfide bond. Asn-84 carries an N-linked (GlcNAc...) asparagine glycan.

As to quaternary structure, alpha-beta TR is a heterodimer composed of an alpha and beta chain; disulfide-linked. The alpha-beta TR is associated with the transmembrane signaling CD3 coreceptor proteins to form the TR-CD3 (TcR or TCR). The assembly of alpha-beta TR heterodimers with CD3 occurs in the endoplasmic reticulum where a single alpha-beta TR heterodimer associates with one CD3D-CD3E heterodimer, one CD3G-CD3E heterodimer and one CD247 homodimer forming a stable octameric structure. CD3D-CD3E and CD3G-CD3E heterodimers preferentially associate with TR alpha and TR beta chains, respectively. The association of the CD247 homodimer is the last step of TcR assembly in the endoplasmic reticulum and is required for transport to the cell surface.

The protein localises to the cell membrane. V region of the variable domain of T cell receptor (TR) beta chain that participates in the antigen recognition. Alpha-beta T cell receptors are antigen specific receptors which are essential to the immune response and are present on the cell surface of T lymphocytes. Recognize peptide-major histocompatibility (MH) (pMH) complexes that are displayed by antigen presenting cells (APC), a prerequisite for efficient T cell adaptive immunity against pathogens. Binding of alpha-beta TR to pMH complex initiates TR-CD3 clustering on the cell surface and intracellular activation of LCK that phosphorylates the ITAM motifs of CD3G, CD3D, CD3E and CD247 enabling the recruitment of ZAP70. In turn ZAP70 phosphorylates LAT, which recruits numerous signaling molecules to form the LAT signalosome. The LAT signalosome propagates signal branching to three major signaling pathways, the calcium, the mitogen-activated protein kinase (MAPK) kinase and the nuclear factor NF-kappa-B (NF-kB) pathways, leading to the mobilization of transcription factors that are critical for gene expression and essential for T cell growth and differentiation. The T cell repertoire is generated in the thymus, by V-(D)-J rearrangement. This repertoire is then shaped by intrathymic selection events to generate a peripheral T cell pool of self-MH restricted, non-autoaggressive T cells. Post-thymic interaction of alpha-beta TR with the pMH complexes shapes TR structural and functional avidity. This is T cell receptor beta variable 6-2 from Homo sapiens (Human).